A 624-amino-acid chain; its full sequence is Chaperone protein HtpG (624 aa).

The a; substrate-binding stretch occupies residues 1 to 336 (MSMKGQETRG…SNDLPLNVSR (336 aa)). The segment at 337-552 (EILQDSRVTQ…ADEMSTQMAK (216 aa)) is b. A c region spans residues 553–624 (LFAAAGQQAP…IRRMNQLLTA (72 aa)).

This sequence belongs to the heat shock protein 90 family. In terms of assembly, homodimer.

The protein localises to the cytoplasm. Its function is as follows. Molecular chaperone. Has ATPase activity. This chain is Chaperone protein HtpG, found in Yersinia enterocolitica serotype O:8 / biotype 1B (strain NCTC 13174 / 8081).